Consider the following 305-residue polypeptide: tRNA dimethylallyltransferase (305 aa).

8–15 (GPTAVGKT) serves as a coordination point for ATP. 10 to 15 (TAVGKT) provides a ligand contact to substrate. The segment at 33 to 36 (DSRQ) is interaction with substrate tRNA.

This sequence belongs to the IPP transferase family. Monomer. Requires Mg(2+) as cofactor.

The enzyme catalyses adenosine(37) in tRNA + dimethylallyl diphosphate = N(6)-dimethylallyladenosine(37) in tRNA + diphosphate. In terms of biological role, catalyzes the transfer of a dimethylallyl group onto the adenine at position 37 in tRNAs that read codons beginning with uridine, leading to the formation of N6-(dimethylallyl)adenosine (i(6)A). This Thermotoga sp. (strain RQ2) protein is tRNA dimethylallyltransferase.